Consider the following 861-residue polypeptide: Bifunctional uridylyltransferase/uridylyl-removing enzyme (861 aa).

The interval 1–321 is uridylyltransferase; that stretch reads MKNDNRIIKN…VYHQKQKIIR (321 aa). The interval 322–678 is uridylyl-removing; that stretch reads LDDEFQLSNR…IMPHHSQGGT (357 aa). Residues 440–562 enclose the HD domain; that stretch reads VDQHTLFVIR…LPHARYLDYL (123 aa). ACT domains follow at residues 679–760 and 788–861; these read EVFI…AVSR and QLFL…KSKY.

The protein belongs to the GlnD family. Requires Mg(2+) as cofactor.

It carries out the reaction [protein-PII]-L-tyrosine + UTP = [protein-PII]-uridylyl-L-tyrosine + diphosphate. The enzyme catalyses [protein-PII]-uridylyl-L-tyrosine + H2O = [protein-PII]-L-tyrosine + UMP + H(+). With respect to regulation, uridylyltransferase (UTase) activity is inhibited by glutamine, while glutamine activates uridylyl-removing (UR) activity. In terms of biological role, modifies, by uridylylation and deuridylylation, the PII regulatory proteins (GlnB and homologs), in response to the nitrogen status of the cell that GlnD senses through the glutamine level. Under low glutamine levels, catalyzes the conversion of the PII proteins and UTP to PII-UMP and PPi, while under higher glutamine levels, GlnD hydrolyzes PII-UMP to PII and UMP (deuridylylation). Thus, controls uridylylation state and activity of the PII proteins, and plays an important role in the regulation of nitrogen assimilation and metabolism. This Legionella pneumophila (strain Paris) protein is Bifunctional uridylyltransferase/uridylyl-removing enzyme.